A 333-amino-acid chain; its full sequence is Holliday junction branch migration complex subunit RuvB (333 aa).

Positions 1-182 (MDERLLSGES…FGVLSRLEYY (182 aa)) are large ATPase domain (RuvB-L). ATP-binding positions include leucine 21, arginine 22, glycine 63, lysine 66, threonine 67, threonine 68, 129 to 131 (EDF), arginine 172, tyrosine 182, and arginine 219. A Mg(2+)-binding site is contributed by threonine 67. Positions 183–253 (TVDQLSAIVE…ITQMALELLQ (71 aa)) are small ATPAse domain (RuvB-S). A head domain (RuvB-H) region spans residues 256 to 333 (KLGLDHIDHK…EHFGMEMPKV (78 aa)). The DNA site is built by arginine 311 and arginine 316.

It belongs to the RuvB family. As to quaternary structure, homohexamer. Forms an RuvA(8)-RuvB(12)-Holliday junction (HJ) complex. HJ DNA is sandwiched between 2 RuvA tetramers; dsDNA enters through RuvA and exits via RuvB. An RuvB hexamer assembles on each DNA strand where it exits the tetramer. Each RuvB hexamer is contacted by two RuvA subunits (via domain III) on 2 adjacent RuvB subunits; this complex drives branch migration. In the full resolvosome a probable DNA-RuvA(4)-RuvB(12)-RuvC(2) complex forms which resolves the HJ.

The protein resides in the cytoplasm. The enzyme catalyses ATP + H2O = ADP + phosphate + H(+). Its function is as follows. The RuvA-RuvB-RuvC complex processes Holliday junction (HJ) DNA during genetic recombination and DNA repair, while the RuvA-RuvB complex plays an important role in the rescue of blocked DNA replication forks via replication fork reversal (RFR). RuvA specifically binds to HJ cruciform DNA, conferring on it an open structure. The RuvB hexamer acts as an ATP-dependent pump, pulling dsDNA into and through the RuvAB complex. RuvB forms 2 homohexamers on either side of HJ DNA bound by 1 or 2 RuvA tetramers; 4 subunits per hexamer contact DNA at a time. Coordinated motions by a converter formed by DNA-disengaged RuvB subunits stimulates ATP hydrolysis and nucleotide exchange. Immobilization of the converter enables RuvB to convert the ATP-contained energy into a lever motion, pulling 2 nucleotides of DNA out of the RuvA tetramer per ATP hydrolyzed, thus driving DNA branch migration. The RuvB motors rotate together with the DNA substrate, which together with the progressing nucleotide cycle form the mechanistic basis for DNA recombination by continuous HJ branch migration. Branch migration allows RuvC to scan DNA until it finds its consensus sequence, where it cleaves and resolves cruciform DNA. In Bacillus mycoides (strain KBAB4) (Bacillus weihenstephanensis), this protein is Holliday junction branch migration complex subunit RuvB.